A 218-amino-acid chain; its full sequence is Imidazole glycerol phosphate synthase subunit HisH (218 aa).

The region spanning 7-211 is the Glutamine amidotransferase type-1 domain; that stretch reads STVIIDTGCA…LALDKASLDA (205 aa). Cys82 acts as the Nucleophile in catalysis. Residues His186 and Glu188 contribute to the active site.

Heterodimer of HisH and HisF.

Its subcellular location is the cytoplasm. The enzyme catalyses 5-[(5-phospho-1-deoxy-D-ribulos-1-ylimino)methylamino]-1-(5-phospho-beta-D-ribosyl)imidazole-4-carboxamide + L-glutamine = D-erythro-1-(imidazol-4-yl)glycerol 3-phosphate + 5-amino-1-(5-phospho-beta-D-ribosyl)imidazole-4-carboxamide + L-glutamate + H(+). It carries out the reaction L-glutamine + H2O = L-glutamate + NH4(+). Its pathway is amino-acid biosynthesis; L-histidine biosynthesis; L-histidine from 5-phospho-alpha-D-ribose 1-diphosphate: step 5/9. In terms of biological role, IGPS catalyzes the conversion of PRFAR and glutamine to IGP, AICAR and glutamate. The HisH subunit catalyzes the hydrolysis of glutamine to glutamate and ammonia as part of the synthesis of IGP and AICAR. The resulting ammonia molecule is channeled to the active site of HisF. This is Imidazole glycerol phosphate synthase subunit HisH from Shewanella sediminis (strain HAW-EB3).